The primary structure comprises 293 residues: Inner membrane ABC transporter permease protein YcjO (293 aa).

Over 1–12 (MNRLFSGRSDMP) the chain is Periplasmic. A helical transmembrane segment spans residues 13-33 (FALLLLAPSLLLLGGLVAWPM). The Cytoplasmic segment spans residues 34–77 (VSNIEISFLRLPLNPNIESTFVGVSNYVRILSDPGFWHSLWMTV). An ABC transmembrane type-1 domain is found at 73–283 (LWMTVWYTAL…IIIFAVILLT (211 aa)). The helical transmembrane segment at 78–98 (WYTALVVAGSTVLGLAVAMFF) threads the bilayer. The Periplasmic segment spans residues 99-110 (NREFRLRKTARS). The helical transmembrane segment at 111 to 131 (LVILSYVTPSISLVFAWKYMF) threads the bilayer. Residues 132–135 (NNGY) lie on the Cytoplasmic side of the membrane. Residues 136-156 (GIVNYLGVDLLHLYEQAPLWF) form a helical membrane-spanning segment. The Periplasmic portion of the chain corresponds to 157–162 (DNPGSS). A helical membrane pass occupies residues 163 to 183 (FVLVVLFAIWRYFPYAFISFL). Topologically, residues 184-214 (AILQTIDKSLYEAAEMDGANAWQRFRIVTLP) are cytoplasmic. A helical membrane pass occupies residues 215–235 (AIMPVLATVVTLRTIWMFYMF). The Periplasmic segment spans residues 236-261 (ADVYLLTTKVDILGVYLYKTAFAFND). A helical membrane pass occupies residues 262–282 (LGKAAAISVVLFIIIFAVILL). Residues 283–293 (TRKRVNLNGNK) lie on the Cytoplasmic side of the membrane.

The protein belongs to the binding-protein-dependent transport system permease family. MalFG subfamily.

The protein resides in the cell inner membrane. Probably part of the binding-protein-dependent transport system YcjNOP. Probably responsible for the translocation of the substrate across the membrane. The protein is Inner membrane ABC transporter permease protein YcjO (ycjO) of Escherichia coli (strain K12).